Consider the following 223-residue polypeptide: Na(+)-translocating NADH-quinone reductase subunit D (223 aa).

Transmembrane regions (helical) follow at residues Thr42–Ile62, Ile66–Val86, Val103–Met123, Phe131–Ile151, and Asn178–Leu198.

This sequence belongs to the NqrDE/RnfAE family. Composed of six subunits; NqrA, NqrB, NqrC, NqrD, NqrE and NqrF.

It is found in the cell inner membrane. The enzyme catalyses a ubiquinone + n Na(+)(in) + NADH + H(+) = a ubiquinol + n Na(+)(out) + NAD(+). Its function is as follows. NQR complex catalyzes the reduction of ubiquinone-1 to ubiquinol by two successive reactions, coupled with the transport of Na(+) ions from the cytoplasm to the periplasm. NqrA to NqrE are probably involved in the second step, the conversion of ubisemiquinone to ubiquinol. In Pseudomonas paraeruginosa (strain DSM 24068 / PA7) (Pseudomonas aeruginosa (strain PA7)), this protein is Na(+)-translocating NADH-quinone reductase subunit D.